The chain runs to 485 residues: Regulatory protein ViaA (485 aa).

It belongs to the ViaA family. In terms of assembly, homodimer. Interacts with RavA.

The protein resides in the cytoplasm. Functionally, component of the RavA-ViaA chaperone complex, which may act on the membrane to optimize the function of some of the respiratory chains. ViaA stimulates the ATPase activity of RavA. This is Regulatory protein ViaA from Photorhabdus laumondii subsp. laumondii (strain DSM 15139 / CIP 105565 / TT01) (Photorhabdus luminescens subsp. laumondii).